The sequence spans 322 residues: Phospho-N-acetylmuramoyl-pentapeptide-transferase (322 aa).

The next 10 membrane-spanning stretches (helical) occupy residues 9–29, 54–74, 82–102, 122–142, 145–165, 176–196, 200–220, 227–247, 255–275, and 302–322; these read IALV…INFM, TMGG…VAAW, VWIL…DDGI, IIIA…FGLY, FAGV…WLVG, LDGL…YIAF, NFAV…FFIF, IFMG…VSIM, LLIG…VISF, and VDIV…AIWG.

The protein belongs to the glycosyltransferase 4 family. MraY subfamily. The cofactor is Mg(2+).

Its subcellular location is the cell membrane. The catalysed reaction is UDP-N-acetyl-alpha-D-muramoyl-L-alanyl-gamma-D-glutamyl-L-lysyl-D-alanyl-D-alanine + di-trans,octa-cis-undecaprenyl phosphate = Mur2Ac(oyl-L-Ala-gamma-D-Glu-L-Lys-D-Ala-D-Ala)-di-trans,octa-cis-undecaprenyl diphosphate + UMP. The protein operates within cell wall biogenesis; peptidoglycan biosynthesis. Catalyzes the initial step of the lipid cycle reactions in the biosynthesis of the cell wall peptidoglycan: transfers peptidoglycan precursor phospho-MurNAc-pentapeptide from UDP-MurNAc-pentapeptide onto the lipid carrier undecaprenyl phosphate, yielding undecaprenyl-pyrophosphoryl-MurNAc-pentapeptide, known as lipid I. The polypeptide is Phospho-N-acetylmuramoyl-pentapeptide-transferase (Lactobacillus acidophilus (strain ATCC 700396 / NCK56 / N2 / NCFM)).